The primary structure comprises 342 residues: S-adenosylmethionine:tRNA ribosyltransferase-isomerase (342 aa).

Belongs to the QueA family. As to quaternary structure, monomer.

Its subcellular location is the cytoplasm. The enzyme catalyses 7-aminomethyl-7-carbaguanosine(34) in tRNA + S-adenosyl-L-methionine = epoxyqueuosine(34) in tRNA + adenine + L-methionine + 2 H(+). It functions in the pathway tRNA modification; tRNA-queuosine biosynthesis. Its function is as follows. Transfers and isomerizes the ribose moiety from AdoMet to the 7-aminomethyl group of 7-deazaguanine (preQ1-tRNA) to give epoxyqueuosine (oQ-tRNA). This Campylobacter jejuni subsp. jejuni serotype O:2 (strain ATCC 700819 / NCTC 11168) protein is S-adenosylmethionine:tRNA ribosyltransferase-isomerase.